A 107-amino-acid polypeptide reads, in one-letter code: YcgL domain-containing protein Pcryo_0807 (107 aa).

The region spanning 1 to 95 (MHCDIYKFLK…QDVMRRQAEL (95 aa)) is the YcgL domain.

The sequence is that of YcgL domain-containing protein Pcryo_0807 from Psychrobacter cryohalolentis (strain ATCC BAA-1226 / DSM 17306 / VKM B-2378 / K5).